Here is a 195-residue protein sequence, read N- to C-terminus: Imidazoleglycerol-phosphate dehydratase (195 aa).

This sequence belongs to the imidazoleglycerol-phosphate dehydratase family.

The protein localises to the cytoplasm. The catalysed reaction is D-erythro-1-(imidazol-4-yl)glycerol 3-phosphate = 3-(imidazol-4-yl)-2-oxopropyl phosphate + H2O. The protein operates within amino-acid biosynthesis; L-histidine biosynthesis; L-histidine from 5-phospho-alpha-D-ribose 1-diphosphate: step 6/9. In Deinococcus radiodurans (strain ATCC 13939 / DSM 20539 / JCM 16871 / CCUG 27074 / LMG 4051 / NBRC 15346 / NCIMB 9279 / VKM B-1422 / R1), this protein is Imidazoleglycerol-phosphate dehydratase.